We begin with the raw amino-acid sequence, 182 residues long: MSNSDLEANMRKSVEATQRNFNTIRTGRANPSLLDRINVEYYGADTPLKSLASLSTPDSQTIAVQPFDMGSLALIEKAIATSDLGFTPNNDGKIIRINVPPLTEERRKEFCKLAAKYSEEGKVALRSVRRDAIDKIKKQEKEGDLSEDQSRDEQDQVQKTTDRFIAELEKHLADKEVEILKV.

The tract at residues 136–158 (IKKQEKEGDLSEDQSRDEQDQVQ) is disordered.

It belongs to the RRF family.

It localises to the cytoplasm. Its function is as follows. Responsible for the release of ribosomes from messenger RNA at the termination of protein biosynthesis. May increase the efficiency of translation by recycling ribosomes from one round of translation to another. This is Ribosome-recycling factor from Synechococcus sp. (strain CC9311).